A 202-amino-acid polypeptide reads, in one-letter code: Methylthioribulose-1-phosphate dehydratase (202 aa).

Zn(2+) contacts are provided by H93 and H95.

This sequence belongs to the aldolase class II family. MtnB subfamily. The cofactor is Zn(2+).

The enzyme catalyses 5-(methylsulfanyl)-D-ribulose 1-phosphate = 5-methylsulfanyl-2,3-dioxopentyl phosphate + H2O. It participates in amino-acid biosynthesis; L-methionine biosynthesis via salvage pathway; L-methionine from S-methyl-5-thio-alpha-D-ribose 1-phosphate: step 2/6. Functionally, catalyzes the dehydration of methylthioribulose-1-phosphate (MTRu-1-P) into 2,3-diketo-5-methylthiopentyl-1-phosphate (DK-MTP-1-P). The polypeptide is Methylthioribulose-1-phosphate dehydratase (Klebsiella pneumoniae subsp. pneumoniae (strain ATCC 700721 / MGH 78578)).